The sequence spans 329 residues: Flotillin-like protein FloA (329 aa).

Transmembrane regions (helical) follow at residues 4–24 (IGFIIIAVIIVVALLILFSFV) and 26–46 (VGLWISALAAGVHVGIGTLVG).

Belongs to the flotillin-like FloA family. Homooligomerizes.

Its subcellular location is the cell membrane. The protein localises to the membrane raft. Its function is as follows. Found in functional membrane microdomains (FMM) that may be equivalent to eukaryotic membrane rafts. FMMs are highly dynamic and increase in number as cells age. Flotillins are thought to be important factors in membrane fluidity. The protein is Flotillin-like protein FloA of Staphylococcus epidermidis (strain ATCC 35984 / DSM 28319 / BCRC 17069 / CCUG 31568 / BM 3577 / RP62A).